The chain runs to 154 residues: uncharacterized protein (154 aa).

An HTH marR-type domain is found at 1–143 (MTESERALLT…LRKLAGSLTK (143 aa)). The segment at residues 57–80 (LSKLAMSLDLKPASVTRMTDILYK) is a DNA-binding region (H-T-H motif).

This is an uncharacterized protein from Bacillus subtilis (strain 168).